Reading from the N-terminus, the 353-residue chain is MANFGPKDIKKLREMTDAGMMDCKKALTEADGDMDKAVEWLRDQGMGAAAKKAGKVAAEGAIGIKVEGHKAVIVEINSQTDFVAQNDKFKALMDTVVNHAFENNLADAEAINNSTINGEPFADFLSQQIAIIGEKLVVRRAALIVGDETTAVNGYVHSNAQNGVIIEAKCDSAKTAEAMTPVLKEVAMHAAAMAPSTLSFKDFDPKFVEDETKGRIVAIETENEELRRLGKTEKNVPQYISMSQLTDEVMAAAEEALKAELAAEGKPEKIWDKILPGKLARFISDNTTLDQEQCLLDQKFVMDDSKTVFEYVQEKAKAAGGSAEIVHFVRLEVGEGIEVEEEDFAAEVAKQMA.

Residues 80–83 form an involved in Mg(2+) ion dislocation from EF-Tu region; the sequence is TDFV.

This sequence belongs to the EF-Ts family.

It is found in the cytoplasm. Its function is as follows. Associates with the EF-Tu.GDP complex and induces the exchange of GDP to GTP. It remains bound to the aminoacyl-tRNA.EF-Tu.GTP complex up to the GTP hydrolysis stage on the ribosome. This chain is Elongation factor Ts, found in Sulfurovum sp. (strain NBC37-1).